A 274-amino-acid chain; its full sequence is Malonyl-[acyl-carrier protein] O-methyltransferase (274 aa).

Belongs to the methyltransferase superfamily.

It carries out the reaction malonyl-[ACP] + S-adenosyl-L-methionine = malonyl-[ACP] methyl ester + S-adenosyl-L-homocysteine. The protein operates within cofactor biosynthesis; biotin biosynthesis. In terms of biological role, converts the free carboxyl group of a malonyl-thioester to its methyl ester by transfer of a methyl group from S-adenosyl-L-methionine (SAM). It allows to synthesize pimeloyl-ACP via the fatty acid synthetic pathway. This chain is Malonyl-[acyl-carrier protein] O-methyltransferase, found in Priestia megaterium (strain DSM 319 / IMG 1521) (Bacillus megaterium).